The primary structure comprises 1546 residues: Mediator of RNA polymerase II transcription subunit 14 (1546 aa).

2 short sequence motifs (LXXLL motif) span residues 51 to 55 and 468 to 472; these read LAELL and LPSLL. Disordered regions lie at residues 692–717, 1000–1193, and 1512–1546; these read KSAT…PSGS, GRAP…NRPW, and NPMM…GGPQ. Composition is skewed to low complexity over residues 693-717, 1020-1035, and 1061-1075; these read SATA…PSGS, GGPS…GSSP, and PSSS…PHPS. The span at 1093–1102 shows a compositional bias: pro residues; it reads PPAPHMPHPS. The span at 1125–1149 shows a compositional bias: polar residues; sequence GPNTLYMQSHQDSPFTAMSPANNQW. Pro residues predominate over residues 1153–1163; it reads PSMPRPSPRPG. A compositionally biased stretch (low complexity) spans 1515-1527; sequence MPMQQLQPQVGPQ.

It belongs to the Mediator complex subunit 14 family. In terms of assembly, component of the Mediator complex.

The protein localises to the nucleus. Its function is as follows. Component of the Mediator complex, a coactivator involved in the regulated transcription of nearly all RNA polymerase II-dependent genes. Mediator functions as a bridge to convey information from gene-specific regulatory proteins to the basal RNA polymerase II transcription machinery. Mediator is recruited to promoters by direct interactions with regulatory proteins and serves as a scaffold for the assembly of a functional preinitiation complex with RNA polymerase II and the general transcription factors. This chain is Mediator of RNA polymerase II transcription subunit 14 (MED14), found in Drosophila pseudoobscura pseudoobscura (Fruit fly).